We begin with the raw amino-acid sequence, 143 residues long: uncharacterized protein (143 aa).

It belongs to the SufE family.

This is an uncharacterized protein from Mycobacterium tuberculosis (strain CDC 1551 / Oshkosh).